The sequence spans 359 residues: ATP-dependent 6-phosphofructokinase 1 (359 aa).

ATP-binding positions include G14, K78 to G79, and G115 to S118. D116 contacts Mg(2+). Residues T139 to D141, R176, M183 to R185, E236, R277, and H283 to R286 contribute to the substrate site. D141 acts as the Proton acceptor in catalysis.

This sequence belongs to the phosphofructokinase type A (PFKA) family. Mixed-substrate PFK group III subfamily. In terms of assembly, homodimer or homotetramer. It depends on Mg(2+) as a cofactor.

It is found in the cytoplasm. The enzyme catalyses beta-D-fructose 6-phosphate + ATP = beta-D-fructose 1,6-bisphosphate + ADP + H(+). The protein operates within carbohydrate degradation; glycolysis; D-glyceraldehyde 3-phosphate and glycerone phosphate from D-glucose: step 3/4. Functionally, catalyzes the phosphorylation of D-fructose 6-phosphate to fructose 1,6-bisphosphate by ATP, the first committing step of glycolysis. The polypeptide is ATP-dependent 6-phosphofructokinase 1 (Nostoc sp. (strain PCC 7120 / SAG 25.82 / UTEX 2576)).